A 94-amino-acid polypeptide reads, in one-letter code: Small ribosomal subunit protein uS19 (94 aa).

Belongs to the universal ribosomal protein uS19 family.

Its function is as follows. Protein S19 forms a complex with S13 that binds strongly to the 16S ribosomal RNA. This chain is Small ribosomal subunit protein uS19, found in Wolbachia sp. subsp. Brugia malayi (strain TRS).